The primary structure comprises 319 residues: tRNA dimethylallyltransferase (319 aa).

16–23 is an ATP binding site; it reads GPTASGKS. Position 18–23 (18–23) interacts with substrate; sequence TASGKS. The interval 46–49 is interaction with substrate tRNA; it reads DSMV.

This sequence belongs to the IPP transferase family. Monomer. Requires Mg(2+) as cofactor.

It carries out the reaction adenosine(37) in tRNA + dimethylallyl diphosphate = N(6)-dimethylallyladenosine(37) in tRNA + diphosphate. Functionally, catalyzes the transfer of a dimethylallyl group onto the adenine at position 37 in tRNAs that read codons beginning with uridine, leading to the formation of N6-(dimethylallyl)adenosine (i(6)A). The protein is tRNA dimethylallyltransferase of Cutibacterium acnes (strain DSM 16379 / KPA171202) (Propionibacterium acnes).